The sequence spans 28 residues: Omega-gliadin (28 aa).

Positions 1-28 are disordered; it reads ARQLNPSDQELQSPQQLYPQQPYPQQPY. Residues 9–20 are compositionally biased toward low complexity; that stretch reads QELQSPQQLYPQ.

This chain is Omega-gliadin, found in Triticum monococcum (Einkorn wheat).